Reading from the N-terminus, the 975-residue chain is Kinesin-like protein KIN-14K (975 aa).

Residues 1 to 40 are disordered; sequence MKNRIKKGSSMIGVYGRSDGSSSIQSSNGSESRESIDDNK. A compositionally biased stretch (low complexity) spans 17–30; it reads RSDGSSSIQSSNGS. Positions 31–40 are enriched in basic and acidic residues; that stretch reads ESRESIDDNK. In terms of domain architecture, Calponin-homology (CH) spans 40-143; sequence KQGHQSLVEW…SLKALKASFS (104 aa). Residues 289 to 345 adopt a coiled-coil conformation; it reads KERSNAELSKLKQELEIVKETHEKQFLELKLNAQKAKVELERQVKNSELRVVEAKEL. Residues 436-746 form the Kinesin motor domain; sequence NIRVYCRIRP…LKFAERVSGV (311 aa). 520-527 lines the ATP pocket; that stretch reads GQTGSGKT. The stretch at 757–788 forms a coiled coil; that stretch reads GRDVRQLMEQVSNLKDMIAKKDEELQKFQNIN. Disordered stretches follow at residues 801–852 and 900–975; these read VSPP…GAKD and LFPE…NRKR. Positions 944-958 are enriched in low complexity; that stretch reads LSISTTSSKALTSSK.

The protein belongs to the TRAFAC class myosin-kinesin ATPase superfamily. Kinesin family. KIN-14 subfamily.

The sequence is that of Kinesin-like protein KIN-14K from Arabidopsis thaliana (Mouse-ear cress).